Here is a 221-residue protein sequence, read N- to C-terminus: Cytidylate kinase (221 aa).

Residue 11-19 coordinates ATP; it reads GPCGAGKST.

This sequence belongs to the cytidylate kinase family. Type 1 subfamily.

Its subcellular location is the cytoplasm. It catalyses the reaction CMP + ATP = CDP + ADP. It carries out the reaction dCMP + ATP = dCDP + ADP. This Mycoplasmopsis agalactiae (strain NCTC 10123 / CIP 59.7 / PG2) (Mycoplasma agalactiae) protein is Cytidylate kinase.